The primary structure comprises 406 residues: Tyrosine--tRNA ligase (406 aa).

Tyr-35 provides a ligand contact to L-tyrosine. Positions 40–49 (ATSASLHIGH) match the 'HIGH' region motif. 2 residues coordinate L-tyrosine: Tyr-167 and Gln-171. A 'KMSKS' region motif is present at residues 227 to 231 (KMGKS). ATP is bound at residue Lys-230. Residues 341 to 405 (ILLVDLMVLA…IGKKKILRIV (65 aa)) form the S4 RNA-binding domain.

It belongs to the class-I aminoacyl-tRNA synthetase family. TyrS type 1 subfamily. Homodimer.

It is found in the cytoplasm. It catalyses the reaction tRNA(Tyr) + L-tyrosine + ATP = L-tyrosyl-tRNA(Tyr) + AMP + diphosphate + H(+). Its function is as follows. Catalyzes the attachment of tyrosine to tRNA(Tyr) in a two-step reaction: tyrosine is first activated by ATP to form Tyr-AMP and then transferred to the acceptor end of tRNA(Tyr). This chain is Tyrosine--tRNA ligase, found in Borrelia duttonii (strain Ly).